Consider the following 145-residue polypeptide: Large-conductance mechanosensitive channel (145 aa).

The next 2 membrane-spanning stretches (helical) occupy residues 14–34 (VIDL…VDSL) and 81–101 (GIFI…FLMV).

The protein belongs to the MscL family. In terms of assembly, homopentamer.

The protein resides in the cell inner membrane. Channel that opens in response to stretch forces in the membrane lipid bilayer. May participate in the regulation of osmotic pressure changes within the cell. This is Large-conductance mechanosensitive channel from Pelobacter propionicus (strain DSM 2379 / NBRC 103807 / OttBd1).